The sequence spans 263 residues: MTTRYKMTMAYDGHLFHGFQLQPDQRTVQGTVEDALKKMTKGKRIIVQGSGRTDAGVHAIGQVIHFDYPGKTIPANRMILALNSMMPTDIIFNNCEIVNENFHARYSIKGKWYRYRVSLDHFVNPFKRFYTGHFSYALDVGKMQEAAKDLLGKHDFTSFAASGGQIEDKVRTIYYVNIAKDEKENEIVFDFIGSGFLYNMVRIMVAALLEIGNGRRPVHDLKRVIAAKDRQEVRQTAQASGLYLYHVFYDEYHKNIDRTGIYN.

D54 serves as the catalytic Nucleophile. Y113 provides a ligand contact to substrate.

Belongs to the tRNA pseudouridine synthase TruA family. Homodimer.

It carries out the reaction uridine(38/39/40) in tRNA = pseudouridine(38/39/40) in tRNA. Formation of pseudouridine at positions 38, 39 and 40 in the anticodon stem and loop of transfer RNAs. The sequence is that of tRNA pseudouridine synthase A from Lactobacillus helveticus (strain DPC 4571).